Here is a 162-residue protein sequence, read N- to C-terminus: MAIKKLVPASHPILTKKAQAVKTFDDSLKRLLQDLEDTMYAQEAAGLCAPQINQSLQVAIIDMEMEGLLQLVNPKIISQSNETITDLEGSITLPDVYGEVTRSKMIVVESYDVNGNKVELTAHEDVARMILHIIDQMNGIPFTERADRILTDKEVEAYFIND.

This sequence belongs to the polypeptide deformylase family.

The sequence is that of Peptide deformylase-like from Staphylococcus aureus (strain COL).